A 240-amino-acid chain; its full sequence is tRNA (guanine-N(1)-)-methyltransferase (240 aa).

Residues Gly108 and 127-132 (IGDYVL) contribute to the S-adenosyl-L-methionine site.

The protein belongs to the RNA methyltransferase TrmD family. Homodimer.

The protein resides in the cytoplasm. The catalysed reaction is guanosine(37) in tRNA + S-adenosyl-L-methionine = N(1)-methylguanosine(37) in tRNA + S-adenosyl-L-homocysteine + H(+). Functionally, specifically methylates guanosine-37 in various tRNAs. This is tRNA (guanine-N(1)-)-methyltransferase from Lactobacillus johnsonii (strain CNCM I-12250 / La1 / NCC 533).